Here is a 501-residue protein sequence, read N- to C-terminus: MSWAALLGLLAVLLLLLLLLSRRRARRPGEPPLDLGSIPWLGHALEFGKDAASFLTRMKEKHGDIFTVLVGGRYVTVLLDPHSYDTVVWDLRTRLDFHPYAIFLMERIFDLQLPNFNPSEEKARMKPTLMHKDLQALTEAMYTNLRTVLLGDSTEGGSGWQEKGLLEFSYSSLLSAGYLTLYGVEASPRTHESQALDRDHSADVFRTFRQLDLMLPKLARGSLSVGDKDHACSVKSRLWKLLSPAGLASRADRSSWLESYLRHLEEMGVSEDMQARALVLQLWATQGNMGPTAFWLLLFLLKNPEALDAVHAELKRIVWQAEKPVLQMTALPQKILDSMPVLDSVLNETLRLTAAPFITREVMADLALPMADRREFSLRRGDRLLLFPFLSPQKDPEIYTEPEVFKYNRFLNPDGSEKKDFYKDGKRLKNYNMPWGAGHNQCLGKSYAINSIKQFVVLLLTHFDLELVSEDTEVPEFDLSRYGFGLMQPEEDVPIRYRTRL.

A helical transmembrane segment spans residues 1-21; the sequence is MSWAALLGLLAVLLLLLLLLS. Residues arginine 107, leucine 113, asparagine 288, 359 to 360, and arginine 383 each bind substrate; that span reads TR. Cysteine 442 is a binding site for heme.

This sequence belongs to the cytochrome P450 family. Heme is required as a cofactor.

Its subcellular location is the endoplasmic reticulum membrane. The enzyme catalyses prostaglandin H2 = prostaglandin I2. It catalyses the reaction a hydroperoxyeicosatetraenoate = an oxoeicosatetraenoate + H2O. It carries out the reaction (15S)-hydroperoxy-(5Z,8Z,11Z,13E)-eicosatetraenoate = 15-oxo-(5Z,8Z,11Z,13E)-eicosatetraenoate + H2O. The catalysed reaction is (15S)-hydroperoxy-(5Z,8Z,11Z,13E)-eicosatetraenoate + AH2 = (15S)-hydroxy-(5Z,8Z,11Z,13E)-eicosatetraenoate + A + H2O. Functionally, catalyzes the biosynthesis and metabolism of eicosanoids. Catalyzes the isomerization of prostaglandin H2 to prostacyclin (= prostaglandin I2), a potent mediator of vasodilation and inhibitor of platelet aggregation. Additionally, displays dehydratase activity, toward hydroperoxyeicosatetraenoates (HPETEs), especially toward (15S)-hydroperoxy-(5Z,8Z,11Z,13E)-eicosatetraenoate (15(S)-HPETE). The sequence is that of Prostacyclin synthase (Ptgis) from Rattus norvegicus (Rat).